Consider the following 529-residue polypeptide: Peptide chain release factor 3 (529 aa).

Residues 11–280 (SKRRTFAIIS…GLTEWAPAPK (270 aa)) form the tr-type G domain. GTP is bound by residues 20–27 (SHPDAGKT), 88–92 (DTPGH), and 142–145 (NKLD).

This sequence belongs to the TRAFAC class translation factor GTPase superfamily. Classic translation factor GTPase family. PrfC subfamily.

The protein resides in the cytoplasm. Functionally, increases the formation of ribosomal termination complexes and stimulates activities of RF-1 and RF-2. It binds guanine nucleotides and has strong preference for UGA stop codons. It may interact directly with the ribosome. The stimulation of RF-1 and RF-2 is significantly reduced by GTP and GDP, but not by GMP. The polypeptide is Peptide chain release factor 3 (Vibrio parahaemolyticus serotype O3:K6 (strain RIMD 2210633)).